The chain runs to 93 residues: uncharacterized protein (93 aa).

Its subcellular location is the plastid. The protein resides in the chloroplast. This is an uncharacterized protein from Diacronema lutheri (Unicellular marine alga).